The sequence spans 359 residues: MILMRRTLKAAILGATGLVGIEYVRMLSNHPYIKPAYLAGKGSVGKPYGEVVRWQTVGQVPKEIADMEIKPTDPKLMDDVDIIFSPLPQGAAGPVEEQFAKEGFPVISNSPDHRFDPDVPLLVPELNPHTISLIDEQRKRREWKGFIVTTPLCTAQGAAIPLGAIFKDYKMDGAFITTIQSLSGAGYPGIPSLDVVDNILPLGDGYDAKTIKEIFRILSEVKRNVDEPKLEDVSLAATTHRIATIHGHYEVLYVSFKEETAAEKVKETLENFRGEPQDLKLPTAPSKPIIVMNEDTRPQVYFDRWAGDIPGMSVVVGRLKQVNKRMIRLVSLIHNTVRGAAGGGILAAELLVEKGYIEK.

T16–V19 provides a ligand contact to NADP(+). C153 (acyl-thioester intermediate) is an active-site residue. S183 to G184 provides a ligand contact to NADP(+). The Proton acceptor role is filled by H248. Residue N335–T336 coordinates NADP(+).

The protein belongs to the aspartate-semialdehyde dehydrogenase family. As to quaternary structure, homodimer and possibly a tetramer. Mg(2+) serves as cofactor. It depends on Mn(2+) as a cofactor.

It catalyses the reaction 3-oxopropanoate + NADP(+) + CoA = malonyl-CoA + NADPH + H(+). Activated by dithioerythritol (5 mM) and inhibited by the thiol-blocking agent iodoacetamide (0.1 mM). In terms of biological role, catalyzes the reduction of malonyl-CoA to malonate semialdehyde, a key step in the 3-hydroxypropanoate and the 3-hydroxypropanoate/4-hydroxybutyrate cycles. Can also use succinyl-CoA and succinate semialdehyde as substrates but at a lower rate than malonyl-CoA. This Sulfurisphaera tokodaii (strain DSM 16993 / JCM 10545 / NBRC 100140 / 7) (Sulfolobus tokodaii) protein is Malonyl-CoA reductase (mcr).